The chain runs to 227 residues: YEATS domain-containing protein 4 (227 aa).

The 144-residue stretch at 15–158 (RVKGVTIVKP…AMMQQLLTTS (144 aa)) folds into the YEATS domain. Lysine 37 is covalently cross-linked (Glycyl lysine isopeptide (Lys-Gly) (interchain with G-Cter in SUMO2)). The tract at residues 93–97 (WGEFE) is diacetylated histone H3 binding. The tract at residues 163-227 (LGAYKHETEF…LEEDDQAKDI (65 aa)) is interaction with MLLT10. An interaction with TACC1 region spans residues 168-227 (HETEFAELEVKTREKLEAAKKKTSFEIAELKERLKASRETINCLKNEIRKLEEDDQAKDI). A coiled-coil region spans residues 178–226 (KTREKLEAAKKKTSFEIAELKERLKASRETINCLKNEIRKLEEDDQAKD).

As to quaternary structure, component of numerous complexes with chromatin remodeling and histone acetyltransferase activity. Component of the NuA4 histone acetyltransferase complex which contains the catalytic subunit KAT5/TIP60 and the subunits EP400, TRRAP/PAF400, BRD8/SMAP, EPC1, DMAP1/DNMAP1, RUVBL1/TIP49, RUVBL2, ING3, actin, ACTL6A/BAF53A, MORF4L1/MRG15, MORF4L2/MRGX, MRGBP, YEATS4/GAS41, VPS72/YL1 and MEAF6. The NuA4 complex interacts with MYC and the adenovirus E1A protein. Component of a NuA4-related complex which contains EP400, TRRAP/PAF400, SRCAP, BRD8/SMAP, EPC1, DMAP1/DNMAP1, RUVBL1/TIP49, RUVBL2, actin, ACTL6A/BAF53A, VPS72 and YEATS4/GAS41. Interacts with MLLT10/AF10. Also interacts with the SWI/SNF component SMARCB1/BAF47, TACC1 and TACC2, and the nuclear matrix protein NUMA1. In terms of tissue distribution, expressed in brain, heart, kidney, liver, lung, pancreas, placenta and skeletal muscle.

Its subcellular location is the nucleus. Its function is as follows. Chromatin reader component of the NuA4 histone acetyltransferase (HAT) complex, a complex involved in transcriptional activation of select genes principally by acetylation of nucleosomal histones H4 and H2A. Specifically recognizes and binds acylated histone H3, with a preference for histone H3 diacetylated at 'Lys-18' and 'Lys-27' (H3K18ac and H3K27ac) or histone H3 diacetylated at 'Lys-14' and 'Lys-27' (H3K14ac and H3K27ac). Also able to recognize and bind crotonylated histone H3. May also recognize and bind histone H3 succinylated at 'Lys-122' (H3K122succ); additional evidences are however required to confirm this result in vivo. Plays a key role in histone variant H2AZ1/H2A.Z deposition into specific chromatin regions: recognizes and binds H3K14ac and H3K27ac on the promoters of actively transcribed genes and recruits NuA4-related complex to deposit H2AZ1/H2A.Z. H2AZ1/H2A.Z deposition is required for maintenance of embryonic stem cell. The chain is YEATS domain-containing protein 4 from Homo sapiens (Human).